The chain runs to 170 residues: Probable phospholipid hydroperoxide glutathione peroxidase (170 aa).

The active site involves C44.

It belongs to the glutathione peroxidase family.

It localises to the cytoplasm. The enzyme catalyses a hydroperoxy polyunsaturated fatty acid + 2 glutathione = a hydroxy polyunsaturated fatty acid + glutathione disulfide + H2O. In terms of biological role, protects cells and enzymes from oxidative damage, by catalyzing the reduction of hydrogen peroxide, lipid peroxides and organic hydroperoxide, by glutathione. The polypeptide is Probable phospholipid hydroperoxide glutathione peroxidase (GPXMC1) (Mesembryanthemum crystallinum (Common ice plant)).